Consider the following 184-residue polypeptide: Thymidine kinase (184 aa).

Residues 10 to 17 (GPMYSGKT), His53, and 83 to 86 (DEVQ) contribute to the ATP site. The active-site Proton acceptor is Glu84. His115 lines the substrate pocket. Residues Cys140 and Cys143 each coordinate Zn(2+). Residues 161–164 (IDVG) and Tyr169 contribute to the substrate site. Residues Cys173 and Cys176 each coordinate Zn(2+).

The protein belongs to the thymidine kinase family. As to quaternary structure, homotetramer.

The protein localises to the cytoplasm. It carries out the reaction thymidine + ATP = dTMP + ADP + H(+). The polypeptide is Thymidine kinase (tdk) (Thermotoga maritima (strain ATCC 43589 / DSM 3109 / JCM 10099 / NBRC 100826 / MSB8)).